Here is a 198-residue protein sequence, read N- to C-terminus: Elongation factor Ts (198 aa).

The involved in Mg(2+) ion dislocation from EF-Tu stretch occupies residues 82-85 (SDFV).

This sequence belongs to the EF-Ts family.

It is found in the cytoplasm. Associates with the EF-Tu.GDP complex and induces the exchange of GDP to GTP. It remains bound to the aminoacyl-tRNA.EF-Tu.GTP complex up to the GTP hydrolysis stage on the ribosome. In Desulfosudis oleivorans (strain DSM 6200 / JCM 39069 / Hxd3) (Desulfococcus oleovorans), this protein is Elongation factor Ts.